Consider the following 242-residue polypeptide: Orotidine 5'-phosphate decarboxylase (242 aa).

Substrate contacts are provided by residues aspartate 21, lysine 43, 71–80 (DLKFFDVPET), threonine 124, arginine 185, glutamine 195, glycine 215, and arginine 216. Lysine 73 acts as the Proton donor in catalysis.

The protein belongs to the OMP decarboxylase family. Type 1 subfamily. Homodimer.

It carries out the reaction orotidine 5'-phosphate + H(+) = UMP + CO2. It participates in pyrimidine metabolism; UMP biosynthesis via de novo pathway; UMP from orotate: step 2/2. Catalyzes the decarboxylation of orotidine 5'-monophosphate (OMP) to uridine 5'-monophosphate (UMP). The sequence is that of Orotidine 5'-phosphate decarboxylase from Methylococcus capsulatus (strain ATCC 33009 / NCIMB 11132 / Bath).